The sequence spans 554 residues: Folate synthesis bifunctional protein, mitochondrial (554 aa).

The transit peptide at Met1–Tyr42 directs the protein to the mitochondrion. The segment at Val90–Leu215 is HPPK. A Pterin-binding domain is found at Thr273–Lys541. Positions Val275–Gly554 are DHPS. Asn280 serves as a coordination point for Mg(2+). Residues Thr320, Asp357, Asn376, Asp449, Lys494, and Arg529–His531 contribute to the (7,8-dihydropterin-6-yl)methyl diphosphate site.

It in the N-terminal section; belongs to the HPPK family. In the C-terminal section; belongs to the DHPS family. Requires Mg(2+) as cofactor. Ubiquitous.

It localises to the mitochondrion. The enzyme catalyses 6-hydroxymethyl-7,8-dihydropterin + ATP = (7,8-dihydropterin-6-yl)methyl diphosphate + AMP + H(+). It carries out the reaction (7,8-dihydropterin-6-yl)methyl diphosphate + 4-aminobenzoate = 7,8-dihydropteroate + diphosphate. It functions in the pathway cofactor biosynthesis; tetrahydrofolate biosynthesis; 2-amino-4-hydroxy-6-hydroxymethyl-7,8-dihydropteridine diphosphate from 7,8-dihydroneopterin triphosphate: step 4/4. Its pathway is cofactor biosynthesis; tetrahydrofolate biosynthesis; 7,8-dihydrofolate from 2-amino-4-hydroxy-6-hydroxymethyl-7,8-dihydropteridine diphosphate and 4-aminobenzoate: step 1/2. Its function is as follows. Catalyzes the first two consecutive steps of tetrahydrofolate biosynthesis. The sequence is that of Folate synthesis bifunctional protein, mitochondrial from Arabidopsis thaliana (Mouse-ear cress).